A 22-amino-acid polypeptide reads, in one-letter code: 2.39 kDa venom peptide (22 aa).

In terms of processing, contains 2 disulfide bonds. In terms of tissue distribution, expressed by the venom gland.

It localises to the secreted. Functionally, not lethal to mice by intraperitoneal or intracerebroventricular injections in doses up to 100 micrograms. This is 2.39 kDa venom peptide from Heterometrus spinifer (Asia giant forest scorpion).